A 419-amino-acid polypeptide reads, in one-letter code: N-acylglucosamine 2-epimerase (419 aa).

The leucine-zipper stretch occupies residues leucine 185 to leucine 206. Serine 418 bears the Phosphoserine mark.

The protein belongs to the N-acylglucosamine 2-epimerase family. Homodimer. Forms a heterodimer with renin and inhibits its activity.

It catalyses the reaction an N-acyl-D-glucosamine = an N-acyl-D-mannosamine. It participates in amino-sugar metabolism; N-acetylneuraminate degradation. Catalyzes the interconversion of N-acetylglucosamine to N-acetylmannosamine. Involved in the N-glycolylneuraminic acid (Neu5Gc) degradation pathway. The chain is N-acylglucosamine 2-epimerase (Renbp) from Mus musculus (Mouse).